The sequence spans 117 residues: DNA-directed RNA polymerase subunit omega (117 aa).

It belongs to the RNA polymerase subunit omega family. As to quaternary structure, the RNAP catalytic core consists of 2 alpha, 1 beta, 1 beta' and 1 omega subunit. When a sigma factor is associated with the core the holoenzyme is formed, which can initiate transcription.

The catalysed reaction is RNA(n) + a ribonucleoside 5'-triphosphate = RNA(n+1) + diphosphate. Promotes RNA polymerase assembly. Latches the N- and C-terminal regions of the beta' subunit thereby facilitating its interaction with the beta and alpha subunits. The chain is DNA-directed RNA polymerase subunit omega from Ruegeria pomeroyi (strain ATCC 700808 / DSM 15171 / DSS-3) (Silicibacter pomeroyi).